We begin with the raw amino-acid sequence, 185 residues long: MLTLASKLKRDDGLKGSRASASTSDSTRRVSVRDKLLVKEVAELEANLPCTCKVHFPDPNKLHCFQLTVSPDEGYYQGGKFQFETEVPDAYNMVPPKVKCLTKIWHPNITETGEICLSLLREHSIDGTGWAPTRTLKDVVWGLNSLFTDLLNFDDPLNIEAAEHHLRDKEDFRDKVDEYIKRYAR.

Met1 carries the N-acetylmethionine modification. Residues 32–185 form the UBC core domain; sequence VRDKLLVKEV…VDEYIKRYAR (154 aa). Cys116 acts as the Glycyl thioester intermediate in catalysis.

Belongs to the ubiquitin-conjugating enzyme family. UBE2F subfamily. As to quaternary structure, interacts with UBA3 and RBX2. Interacts (N-terminally acetylated form) with (via DCUN1 domain) DCUN1D1, DCUN1D2, DCUN1D3, DCUN1D4 and DCUN1D5. The acetylation of Met-1 increases affinity for DCUN1D3 by about 2 orders of magnitude and is crucial for NEDD8 transfer to cullins.

The enzyme catalyses [E1 NEDD8-activating enzyme]-S-[NEDD8 protein]-yl-L-cysteine + [E2 NEDD8-conjugating enzyme]-L-cysteine = [E1 NEDD8-activating enzyme]-L-cysteine + [E2 NEDD8-conjugating enzyme]-S-[NEDD8-protein]-yl-L-cysteine.. It functions in the pathway protein modification; protein neddylation. Accepts the ubiquitin-like protein NEDD8 from the UBA3-NAE1 E1 complex and catalyzes its covalent attachment to other proteins. Together with the E3 ubiquitin ligase RNF7/RBX2, specifically neddylates cullin-5 (CUL5). Does not neddylate CUL1, CUL2, CUL3, CUL4A or CUL4B. Mediates neddylation of the CUL9-RBX1 complex. The polypeptide is NEDD8-conjugating enzyme UBE2F (Ube2f) (Rattus norvegicus (Rat)).